Reading from the N-terminus, the 435-residue chain is Serine--tRNA ligase (435 aa).

239 to 241 (TAE) contributes to the L-serine binding site. Position 270 to 272 (270 to 272 (RAE)) interacts with ATP. Position 293 (Glu293) interacts with L-serine. Residue 357–360 (EISS) coordinates ATP. Ser393 contacts L-serine.

This sequence belongs to the class-II aminoacyl-tRNA synthetase family. Type-1 seryl-tRNA synthetase subfamily. Homodimer. The tRNA molecule binds across the dimer.

The protein resides in the cytoplasm. It carries out the reaction tRNA(Ser) + L-serine + ATP = L-seryl-tRNA(Ser) + AMP + diphosphate + H(+). The catalysed reaction is tRNA(Sec) + L-serine + ATP = L-seryl-tRNA(Sec) + AMP + diphosphate + H(+). Its pathway is aminoacyl-tRNA biosynthesis; selenocysteinyl-tRNA(Sec) biosynthesis; L-seryl-tRNA(Sec) from L-serine and tRNA(Sec): step 1/1. Functionally, catalyzes the attachment of serine to tRNA(Ser). Is also able to aminoacylate tRNA(Sec) with serine, to form the misacylated tRNA L-seryl-tRNA(Sec), which will be further converted into selenocysteinyl-tRNA(Sec). The sequence is that of Serine--tRNA ligase from Parvibaculum lavamentivorans (strain DS-1 / DSM 13023 / NCIMB 13966).